A 2458-amino-acid chain; its full sequence is Highly reducing polyketide synthase alnA (2458 aa).

Residues 48–473 form the Ketosynthase family 3 (KS3) domain; that stretch reads TMPIAIVGMA…GANAHVILDD (426 aa). Residues Cys221, His356, and His396 each act as for beta-ketoacyl synthase activity in the active site. The tract at residues 488 to 515 is disordered; sequence HTTLSESEDSSDSGLEMDSSTSDSGEGQ. The span at 499–515 shows a compositional bias: low complexity; sequence DSGLEMDSSTSDSGEGQ. Residues 609 to 932 form a malonyl-CoA:ACP transacylase (MAT) domain region; the sequence is VFTGQGAQWP…PYMSVLSRGK (324 aa). Ser697 acts as the For malonyltransferase activity in catalysis. An N-terminal hotdog fold region spans residues 1000-1130; it reads NDLLGVPVAQ…GSFSLHYEDA (131 aa). Residues 1000–1307 enclose the PKS/mFAS DH domain; sequence NDLLGVPVAQ…VTEVSAGAST (308 aa). The interval 1001 to 1305 is dehydratase (DH) domain; it reads DLLGVPVAQQ…MTVTEVSAGA (305 aa). His1032 (proton acceptor; for dehydratase activity) is an active-site residue. The interval 1148 to 1307 is C-terminal hotdog fold; sequence TRACRKLDVE…VTEVSAGAST (160 aa). Asp1218 serves as the catalytic Proton donor; for dehydratase activity. Residues 1740–2051 are enoylreductase (ER) domain; it reads GSPSQARWVP…GQQQHERVAA (312 aa). The tract at residues 2076-2264 is ketoreductase (KR) domain; it reads KPDATYILAG…VTDASHFNEN (189 aa). A Carrier domain is found at 2359 to 2441; that stretch reads STTVAQAHEV…RLALKIVSKS (83 aa). Residue Ser2401 is modified to O-(pantetheine 4'-phosphoryl)serine.

It functions in the pathway polyketide biosynthesis. Highly reducing polyketide synthase; part of the gene cluster that mediates the biosynthesis of asperlin, a polyketide showing anti-inflammatory, antitumor and antibiotic activities. The first step of the asperlin biosynthesis is the production of the intermediate 2,4,6-octatrienoic acid by the highly redusing polyketide synthase alnA with cleavage of the PKS product by the esterase alnB. 2,4,6-octatrienoic acid is further converted to asperlin via several steps involving the remaining enzymes from the cluster. This chain is Highly reducing polyketide synthase alnA, found in Emericella nidulans (strain FGSC A4 / ATCC 38163 / CBS 112.46 / NRRL 194 / M139) (Aspergillus nidulans).